Here is a 276-residue protein sequence, read N- to C-terminus: Dermonecrotic toxin LvSicTox-alphaII1 (276 aa).

The active site involves histidine 5. Mg(2+)-binding residues include glutamate 25 and aspartate 27. Residue histidine 41 is the Nucleophile of the active site. 2 disulfide bridges follow: cysteine 45/cysteine 51 and cysteine 47/cysteine 193. Aspartate 85 is a Mg(2+) binding site.

It belongs to the arthropod phospholipase D family. Class II subfamily. Mg(2+) serves as cofactor. As to expression, expressed by the venom gland.

It is found in the secreted. It catalyses the reaction an N-(acyl)-sphingosylphosphocholine = an N-(acyl)-sphingosyl-1,3-cyclic phosphate + choline. The catalysed reaction is an N-(acyl)-sphingosylphosphoethanolamine = an N-(acyl)-sphingosyl-1,3-cyclic phosphate + ethanolamine. It carries out the reaction a 1-acyl-sn-glycero-3-phosphocholine = a 1-acyl-sn-glycero-2,3-cyclic phosphate + choline. The enzyme catalyses a 1-acyl-sn-glycero-3-phosphoethanolamine = a 1-acyl-sn-glycero-2,3-cyclic phosphate + ethanolamine. Functionally, dermonecrotic toxins cleave the phosphodiester linkage between the phosphate and headgroup of certain phospholipids (sphingolipid and lysolipid substrates), forming an alcohol (often choline) and a cyclic phosphate. This toxin acts on sphingomyelin (SM). It may also act on ceramide phosphoethanolamine (CPE), lysophosphatidylcholine (LPC) and lysophosphatidylethanolamine (LPE), but not on lysophosphatidylserine (LPS), and lysophosphatidylglycerol (LPG). It acts by transphosphatidylation, releasing exclusively cyclic phosphate products as second products. Induces dermonecrosis, hemolysis, increased vascular permeability, edema, inflammatory response, and platelet aggregation. This is Dermonecrotic toxin LvSicTox-alphaII1 from Loxosceles variegata (Recluse spider).